The chain runs to 381 residues: MERSHLPETPFDLAHSGPRFQAQSSGNGSVLDNVLPDMAHLVNPYWSRFAPMDPMMSKILGLFTLAIMIISCCGNGVVVYIFGGTKSLRTPANLLVLNLAFSDFCMMASQSPVMIINFYYETWVLGPLWCDIYAGCGSLFGCVSIWSMCMIAFDRYNVIVKGINGTPMTIKTSIMKILFIWMMAVFWTVMPLIGWSAYVPEGNLTACSIDYMTRMWNPRSYLITYSLFVYYTPLFLICYSYWFIIAAVAAHEKAMREQAKKMNVKSLRSSEDCDKSAEGKLAKVALTTISLWFMAWTPYLVICYFGLFKIDGLTPLTTIWGATFAKTSAVYNPIVYGISHPKYRIVLKEKCPMCVFGNTDEPKPDAPASDTETTSEADSKA.

Topologically, residues 1–56 (MERSHLPETPFDLAHSGPRFQAQSSGNGSVLDNVLPDMAHLVNPYWSRFAPMDPMM) are extracellular. N-linked (GlcNAc...) asparagine glycosylation occurs at Asn-27. The helical transmembrane segment at 57–81 (SKILGLFTLAIMIISCCGNGVVVYI) threads the bilayer. Over 82 to 93 (FGGTKSLRTPAN) the chain is Cytoplasmic. A helical membrane pass occupies residues 94-119 (LLVLNLAFSDFCMMASQSPVMIINFY). Residues 120 to 133 (YETWVLGPLWCDIY) lie on the Extracellular side of the membrane. Residues Cys-130 and Cys-207 are joined by a disulfide bond. Residues 134–153 (AGCGSLFGCVSIWSMCMIAF) form a helical membrane-spanning segment. Residues 154–172 (DRYNVIVKGINGTPMTIKT) lie on the Cytoplasmic side of the membrane. The helical transmembrane segment at 173–196 (SIMKILFIWMMAVFWTVMPLIGWS) threads the bilayer. Residues 197 to 220 (AYVPEGNLTACSIDYMTRMWNPRS) lie on the Extracellular side of the membrane. A helical transmembrane segment spans residues 221 to 248 (YLITYSLFVYYTPLFLICYSYWFIIAAV). The Cytoplasmic portion of the chain corresponds to 249-283 (AAHEKAMREQAKKMNVKSLRSSEDCDKSAEGKLAK). Residues 284–307 (VALTTISLWFMAWTPYLVICYFGL) traverse the membrane as a helical segment. The Extracellular portion of the chain corresponds to 308-314 (FKIDGLT). Residues 315–339 (PLTTIWGATFAKTSAVYNPIVYGIS) form a helical membrane-spanning segment. Lys-326 carries the N6-(retinylidene)lysine modification. The Cytoplasmic portion of the chain corresponds to 340-381 (HPKYRIVLKEKCPMCVFGNTDEPKPDAPASDTETTSEADSKA). Residues 359–381 (TDEPKPDAPASDTETTSEADSKA) form a disordered region. Residues 370-381 (DTETTSEADSKA) are compositionally biased toward polar residues.

Belongs to the G-protein coupled receptor 1 family. Opsin subfamily. In terms of processing, phosphorylated on some or all of the serine and threonine residues present in the C-terminal region. In terms of tissue distribution, predominant opsin expressed in the dorsal ocelli.

The protein resides in the membrane. Functionally, visual pigments are the light-absorbing molecules that mediate vision. They consist of an apoprotein, opsin, covalently linked to cis-retinal. This chain is Opsin Rh2 (Rh2), found in Drosophila melanogaster (Fruit fly).